A 160-amino-acid polypeptide reads, in one-letter code: Epithelial membrane protein 1 (160 aa).

Residues 1 to 21 (MLVLLAGLFVVHIATAIMLFV) traverse the membrane as a helical segment. Residue Asn43 is glycosylated (N-linked (GlcNAc...) asparagine). The next 3 membrane-spanning stretches (helical) occupy residues 67–87 (FMIL…FQLF), 95–115 (FFLS…GVSI), and 137–157 (FILT…YMVL).

This sequence belongs to the PMP-22/EMP/MP20 family. As to expression, most prominently found in the gastrointestinal tract, skin, lung, and brain but not in liver.

It localises to the membrane. The sequence is that of Epithelial membrane protein 1 (Emp1) from Rattus norvegicus (Rat).